A 122-amino-acid polypeptide reads, in one-letter code: UPF0102 protein NGR_c36770 (122 aa).

The protein belongs to the UPF0102 family.

This chain is UPF0102 protein NGR_c36770, found in Sinorhizobium fredii (strain NBRC 101917 / NGR234).